The chain runs to 269 residues: Phosphate import ATP-binding protein PstB (269 aa).

The ABC transporter domain occupies 21–264 (IEIKDFNFFY…PKDRRTENYI (244 aa)). Residue 55–62 (GPSGCGKT) participates in ATP binding.

The protein belongs to the ABC transporter superfamily. Phosphate importer (TC 3.A.1.7) family. The complex is composed of two ATP-binding proteins (PstB), two transmembrane proteins (PstC and PstA) and a solute-binding protein (PstS).

It is found in the cell membrane. It carries out the reaction phosphate(out) + ATP + H2O = ADP + 2 phosphate(in) + H(+). Its function is as follows. Part of the ABC transporter complex PstSACB involved in phosphate import. Responsible for energy coupling to the transport system. The protein is Phosphate import ATP-binding protein PstB of Mycoplasma capricolum subsp. capricolum (strain California kid / ATCC 27343 / NCTC 10154).